The following is a 23-amino-acid chain: Phospholipase A2 crotoxin basic chain 3 (23 aa).

Requires Ca(2+) as cofactor. Contains 7 disulfide bonds. As to expression, expressed by the venom gland.

It is found in the secreted. The catalysed reaction is a 1,2-diacyl-sn-glycero-3-phosphocholine + H2O = a 1-acyl-sn-glycero-3-phosphocholine + a fatty acid + H(+). Functionally, snake venom phospholipase A2 (PLA2) that shows presynaptic neurotoxicity. PLA2 catalyzes the calcium-dependent hydrolysis of the 2-acyl groups in 3-sn-phosphoglycerides. This Crotalus durissus terrificus (South American rattlesnake) protein is Phospholipase A2 crotoxin basic chain 3.